Consider the following 225-residue polypeptide: 3-dehydroquinate dehydratase (225 aa).

3-dehydroquinate is bound by residues Ser6, 30-32 (EWR), and Arg62. The active-site Proton donor/acceptor is the His118. Catalysis depends on Lys143, which acts as the Schiff-base intermediate with substrate. The 3-dehydroquinate site is built by Arg186, Ser205, and Gln209.

This sequence belongs to the type-I 3-dehydroquinase family. As to quaternary structure, homodimer.

It carries out the reaction 3-dehydroquinate = 3-dehydroshikimate + H2O. It participates in metabolic intermediate biosynthesis; chorismate biosynthesis; chorismate from D-erythrose 4-phosphate and phosphoenolpyruvate: step 3/7. Involved in the third step of the chorismate pathway, which leads to the biosynthesis of aromatic amino acids. Catalyzes the cis-dehydration of 3-dehydroquinate (DHQ) and introduces the first double bond of the aromatic ring to yield 3-dehydroshikimate. In Streptococcus pneumoniae (strain Hungary19A-6), this protein is 3-dehydroquinate dehydratase.